The following is a 138-amino-acid chain: Centromere protein S (138 aa).

Met1 carries the N-acetylmethionine modification. Residues 110–138 are disordered; that stretch reads RKAQKKKKSEDGSKNSRQPAEAGVVESEN.

Belongs to the TAF9 family. CENP-S/MHF1 subfamily. As to quaternary structure, heterodimer with CENPX, sometimes called MHF; this interaction stabilizes both partners. MHF heterodimers can assemble to form tetrameric structures. MHF also coassemble with CENPT-CENPW heterodimers at centromeres to form the tetrameric CENP-T-W-S-X complex. Forms a discrete complex with FANCM and CENPX, called FANCM-MHF; this interaction, probably mediated by direct binding between CENPS and FANCM, leads to synergistic activation of double-stranded DNA binding and strongly stimulates FANCM-mediated DNA remodeling. Recruited by FANCM to the Fanconi anemia (FA) core complex, which consists of CENPS, CENPX, FANCA, FANCB, FANCC, FANCE, FANCF, FANCG, FANCL, FANCM, FAAP24 and FAAP100. The FA core complex associates with Bloom syndrome (BLM) complex, which consists of at least BLM, DNA topoisomerase 3-alpha (TOP3A), RMI1/BLAP75, RPA1/RPA70 and RPA2/RPA32. The super complex between FA and BLM is called BRAFT. Component of the CENPA-CAD complex, composed of CENPI, CENPK, CENPL, CENPO, CENPP, CENPQ, CENPR and CENPS. The CENPA-CAD complex is probably recruited on centromeres by the CENPA-NAC complex, composed of at least CENPA, CENPC, CENPH, CENPM, CENPN, CENPT and CENPU. In terms of tissue distribution, ubiquitously expressed.

The protein resides in the nucleus. Its subcellular location is the chromosome. The protein localises to the centromere. It is found in the kinetochore. Its function is as follows. DNA-binding component of the Fanconi anemia (FA) core complex. Required for the normal activation of the FA pathway, leading to monoubiquitination of the FANCI-FANCD2 complex in response to DNA damage, cellular resistance to DNA cross-linking drugs, and prevention of chromosomal breakage. In complex with CENPX (MHF heterodimer), crucial cofactor for FANCM in both binding and ATP-dependent remodeling of DNA. Stabilizes FANCM. In complex with CENPX and FANCM (but not other FANC proteins), rapidly recruited to blocked forks and promotes gene conversion at blocked replication forks. In complex with CENPT, CENPW and CENPX (CENP-T-W-S-X heterotetramer), involved in the formation of a functional kinetochore outer plate, which is essential for kinetochore-microtubule attachment and faithful mitotic progression. As a component of MHF and CENP-T-W-S-X complexes, binds DNA and bends it to form a nucleosome-like structure. DNA-binding function is fulfilled in the presence of CENPX, with the following preference for DNA substates: Holliday junction &gt; double-stranded &gt; splay arm &gt; single-stranded. Does not bind DNA on its own. This Homo sapiens (Human) protein is Centromere protein S (CENPS).